The chain runs to 84 residues: Sulfur carrier protein TusA (84 aa).

Residue Cys21 is the Cysteine persulfide intermediate of the active site.

The protein belongs to the sulfur carrier protein TusA family.

It localises to the cytoplasm. Functionally, sulfur carrier protein which probably makes part of a sulfur-relay system. This chain is Sulfur carrier protein TusA, found in Pseudomonas syringae pv. tomato (strain ATCC BAA-871 / DC3000).